The following is a 61-amino-acid chain: Small ribosomal subunit protein uS14 (61 aa).

Residues Cys-24, Cys-27, Cys-40, and Cys-43 each contribute to the Zn(2+) site.

The protein belongs to the universal ribosomal protein uS14 family. Zinc-binding uS14 subfamily. As to quaternary structure, part of the 30S ribosomal subunit. Contacts proteins S3 and S10. Zn(2+) is required as a cofactor.

Functionally, binds 16S rRNA, required for the assembly of 30S particles and may also be responsible for determining the conformation of the 16S rRNA at the A site. In Thermobifida fusca (strain YX), this protein is Small ribosomal subunit protein uS14.